The primary structure comprises 213 residues: MPDFKIVVSDPKTKEDKKEKLKVKVSDKVKSNQGEKEGKAIPLARINDKIKQALNLDDFLTLEITKQEGDKKVKIKGHFKIEVDNTVPDGEVWISKSMAEKFGAEEFEALAYRTRAFQLSLDQSKLPNLVGTKIGDVIDINVSGVNLKLKITGGSDNSGFSMRFDVGGGAKRKILVSGPPGYYPKEDGLRRKRTVRGNMITPEIVQINTIMIR.

It belongs to the eukaryotic ribosomal protein eS6 family.

The chain is Small ribosomal subunit protein eS6 from Sulfolobus acidocaldarius (strain ATCC 33909 / DSM 639 / JCM 8929 / NBRC 15157 / NCIMB 11770).